Here is a 420-residue protein sequence, read N- to C-terminus: MTTFGTIEQAMAEIVAGRPVVVVDDANRENEGDLIFAAELATPELVAFMVRYTSGYICAPLTEDECDRLDLPPMHHTNQDRRGTAYTVTVDAREGVSTGISAADRAHTIRLLADPRTGPADLARPGHVVPLRARQGGVLRRPGHTEAAIDLTRLAGLRPAGVLCELVNDDGTMMRVPDLERFCAEHSLVLITIADLVAYRRRTEKQVELVAEARMPTRHGVFRAFGYRSDYDSAEHVALVMGDLGDGRDVLVRVHSECLTGDVLGSLRCDCGPQLNAALDQVAREGRGVVLYVRGHEGRGIGLLHKLQAYQLQDTGRDTVDANLDLGLPADARDYGTGAQILYDLGVRSMRLLTNNPAKRAGLEGYGLTVAGRVELPVRPHPENVRYLRTKRDRMGHLLEFDEVIEAPMGRAVVGDGIGA.

Residues 1–202 form a DHBP synthase region; it reads MTTFGTIEQA…IADLVAYRRR (202 aa). D-ribulose 5-phosphate is bound by residues 28-29, D33, 141-145, and E165; these read RE and RPGHT. E29 serves as a coordination point for Mg(2+). H144 serves as a coordination point for Mg(2+). The segment at 203-420 is GTP cyclohydrolase II; sequence TEKQVELVAE…RAVVGDGIGA (218 aa). 253 to 257 is a GTP binding site; the sequence is RVHSE. Positions 258, 269, and 271 each coordinate Zn(2+). GTP contacts are provided by residues Q274, 297-299, and T319; that span reads EGR. The active-site Proton acceptor; for GTP cyclohydrolase activity is the D331. R333 serves as the catalytic Nucleophile; for GTP cyclohydrolase activity. GTP-binding residues include T354 and K359.

This sequence in the N-terminal section; belongs to the DHBP synthase family. The protein in the C-terminal section; belongs to the GTP cyclohydrolase II family. Mg(2+) is required as a cofactor. Mn(2+) serves as cofactor. It depends on Zn(2+) as a cofactor.

It carries out the reaction D-ribulose 5-phosphate = (2S)-2-hydroxy-3-oxobutyl phosphate + formate + H(+). The catalysed reaction is GTP + 4 H2O = 2,5-diamino-6-hydroxy-4-(5-phosphoribosylamino)-pyrimidine + formate + 2 phosphate + 3 H(+). Its pathway is cofactor biosynthesis; riboflavin biosynthesis; 2-hydroxy-3-oxobutyl phosphate from D-ribulose 5-phosphate: step 1/1. It participates in cofactor biosynthesis; riboflavin biosynthesis; 5-amino-6-(D-ribitylamino)uracil from GTP: step 1/4. Its function is as follows. Catalyzes the conversion of D-ribulose 5-phosphate to formate and 3,4-dihydroxy-2-butanone 4-phosphate. Catalyzes the conversion of GTP to 2,5-diamino-6-ribosylamino-4(3H)-pyrimidinone 5'-phosphate (DARP), formate and pyrophosphate. The protein is Riboflavin biosynthesis protein RibBA of Salinispora arenicola (strain CNS-205).